Here is a 625-residue protein sequence, read N- to C-terminus: Protein SUPPRESSOR OF GENE SILENCING 3 (625 aa).

Disordered regions lie at residues 1–20 (MSSRAGPMSKEKNVQGGYRP), 30–148 (AGTR…SAQH), and 161–195 (VDNASEEENDSDALDDSDDDLASDDYDSDVSQKSH). A compositionally biased stretch (polar residues) spans 54 to 70 (KPGNTSGKTWVSQNSNP). Positions 80–94 (GRGSNVSGRGNNVSG) are enriched in low complexity. Residues 161-188 (VDNASEEENDSDALDDSDDDLASDDYDS) are compositionally biased toward acidic residues. 2 coiled-coil regions span residues 452-533 (KNKL…QQQE) and 564-615 (IEFQ…EQLM).

The protein belongs to the SGS3 family. As to quaternary structure, interacts with begomoviruses protein V2. Interacts with SGIP1 in cytoplasmic granules.

Its subcellular location is the cytoplasm. It is found in the perinuclear region. The protein localises to the cytoplasmic granule. Its function is as follows. Required for post-transcriptional gene silencing and natural virus resistance. May bind nucleic acids and is essential for the biogenesis of trans-acting siRNAs but is not required for silencing induced by IR-PTGS. Involved in the juvenile-to-adult transition regulation. In case of begomoviruses infection, it is targeted by the viral protein V2 leading to suppression of post-transcriptional gene silencing. Involved in the mechanisms necessary for quick response to heat and subsequent heritable transgenerational memory of heat acclimation (global warming) such as early flowering and attenuated immunity; this process includes epigenetic regulation as well as post-transcriptional gene silencing (PTGS). In response to heat, HSFA2 is activated and promotes the expression of REF6 which in turn derepresses HSFA2, thus establishing an inheritable feedback loop able to trigger SGIP1 and subsequent SGIP1-mediated SGS3 degradation; this prevents the biosynthesis of trans-acting siRNA (tasiRNA) and leads to the release of HTT5, which drives early flowering but attenuates immunity. This chain is Protein SUPPRESSOR OF GENE SILENCING 3, found in Arabidopsis thaliana (Mouse-ear cress).